The primary structure comprises 437 residues: Protein translocase subunit SecY (437 aa).

10 helical membrane-spanning segments follow: residues 19 to 39, 68 to 88, 121 to 141, 156 to 176, 188 to 208, 218 to 238, 274 to 294, 317 to 337, 378 to 398, and 400 to 420; these read LFTL…APGV, LLQI…SIIL, VALA…GALF, IFTT…VMWL, GMSI…LWAI, WIEF…VVFV, GVIP…IVQF, YIAT…AISF, SLYL…FGGA, and QNFP…LETV.

This sequence belongs to the SecY/SEC61-alpha family. As to quaternary structure, component of the Sec protein translocase complex. Heterotrimer consisting of SecY, SecE and SecG subunits. The heterotrimers can form oligomers, although 1 heterotrimer is thought to be able to translocate proteins. Interacts with the ribosome. Interacts with SecDF, and other proteins may be involved. Interacts with SecA.

It is found in the cell membrane. Its function is as follows. The central subunit of the protein translocation channel SecYEG. Consists of two halves formed by TMs 1-5 and 6-10. These two domains form a lateral gate at the front which open onto the bilayer between TMs 2 and 7, and are clamped together by SecE at the back. The channel is closed by both a pore ring composed of hydrophobic SecY resides and a short helix (helix 2A) on the extracellular side of the membrane which forms a plug. The plug probably moves laterally to allow the channel to open. The ring and the pore may move independently. In Streptomyces griseus, this protein is Protein translocase subunit SecY.